The chain runs to 307 residues: Methionyl-tRNA formyltransferase (307 aa).

109–112 (SLLP) contributes to the (6S)-5,6,7,8-tetrahydrofolate binding site.

The protein belongs to the Fmt family.

It catalyses the reaction L-methionyl-tRNA(fMet) + (6R)-10-formyltetrahydrofolate = N-formyl-L-methionyl-tRNA(fMet) + (6S)-5,6,7,8-tetrahydrofolate + H(+). In terms of biological role, attaches a formyl group to the free amino group of methionyl-tRNA(fMet). The formyl group appears to play a dual role in the initiator identity of N-formylmethionyl-tRNA by promoting its recognition by IF2 and preventing the misappropriation of this tRNA by the elongation apparatus. The chain is Methionyl-tRNA formyltransferase from Mycobacteroides abscessus (strain ATCC 19977 / DSM 44196 / CCUG 20993 / CIP 104536 / JCM 13569 / NCTC 13031 / TMC 1543 / L948) (Mycobacterium abscessus).